Reading from the N-terminus, the 193-residue chain is NADH-quinone oxidoreductase subunit B (193 aa).

C72, C73, C137, and C167 together coordinate [4Fe-4S] cluster.

It belongs to the complex I 20 kDa subunit family. As to quaternary structure, NDH-1 is composed of 14 different subunits. Subunits NuoB, C, D, E, F, and G constitute the peripheral sector of the complex. It depends on [4Fe-4S] cluster as a cofactor.

It is found in the cell inner membrane. It catalyses the reaction a quinone + NADH + 5 H(+)(in) = a quinol + NAD(+) + 4 H(+)(out). Functionally, NDH-1 shuttles electrons from NADH, via FMN and iron-sulfur (Fe-S) centers, to quinones in the respiratory chain. The immediate electron acceptor for the enzyme in this species is believed to be ubiquinone. Couples the redox reaction to proton translocation (for every two electrons transferred, four hydrogen ions are translocated across the cytoplasmic membrane), and thus conserves the redox energy in a proton gradient. The polypeptide is NADH-quinone oxidoreductase subunit B (Bartonella bacilliformis (strain ATCC 35685 / KC583 / Herrer 020/F12,63)).